Consider the following 104-residue polypeptide: Pyrimidine/purine nucleoside phosphorylase (104 aa).

Belongs to the nucleoside phosphorylase PpnP family.

The enzyme catalyses a purine D-ribonucleoside + phosphate = a purine nucleobase + alpha-D-ribose 1-phosphate. The catalysed reaction is adenosine + phosphate = alpha-D-ribose 1-phosphate + adenine. It catalyses the reaction cytidine + phosphate = cytosine + alpha-D-ribose 1-phosphate. It carries out the reaction guanosine + phosphate = alpha-D-ribose 1-phosphate + guanine. The enzyme catalyses inosine + phosphate = alpha-D-ribose 1-phosphate + hypoxanthine. The catalysed reaction is thymidine + phosphate = 2-deoxy-alpha-D-ribose 1-phosphate + thymine. It catalyses the reaction uridine + phosphate = alpha-D-ribose 1-phosphate + uracil. It carries out the reaction xanthosine + phosphate = alpha-D-ribose 1-phosphate + xanthine. In terms of biological role, catalyzes the phosphorolysis of diverse nucleosides, yielding D-ribose 1-phosphate and the respective free bases. Can use uridine, adenosine, guanosine, cytidine, thymidine, inosine and xanthosine as substrates. Also catalyzes the reverse reactions. This Leptospira borgpetersenii serovar Hardjo-bovis (strain L550) protein is Pyrimidine/purine nucleoside phosphorylase.